Here is a 206-residue protein sequence, read N- to C-terminus: 2,3-bisphosphoglycerate-dependent phosphoglycerate mutase (206 aa).

Residues 9 to 16 (RHGQSEWN), 22 to 23 (TG), Arg61, 88 to 91 (ERDY), Lys99, 115 to 116 (RR), and 159 to 160 (GN) each bind substrate. The Tele-phosphohistidine intermediate role is filled by His10. The active-site Proton donor/acceptor is the Glu88.

Belongs to the phosphoglycerate mutase family. BPG-dependent PGAM subfamily. As to quaternary structure, homodimer.

It catalyses the reaction (2R)-2-phosphoglycerate = (2R)-3-phosphoglycerate. The protein operates within carbohydrate degradation; glycolysis; pyruvate from D-glyceraldehyde 3-phosphate: step 3/5. Functionally, catalyzes the interconversion of 2-phosphoglycerate and 3-phosphoglycerate. The sequence is that of 2,3-bisphosphoglycerate-dependent phosphoglycerate mutase from Chelativorans sp. (strain BNC1).